A 219-amino-acid polypeptide reads, in one-letter code: AA11 family lytic polysaccharide monooxygenase A (219 aa).

Residues 1–18 (MMLSKVVMGLLTASLAAA) form the signal peptide. H19 is a Cu(+) binding site. Cystine bridges form between C58–C154, C94–C116, and C185–C218. The N-linked (GlcNAc...) asparagine glycan is linked to N80. H89 is a Cu(+) binding site.

It belongs to the polysaccharide monooxygenase AA11 family. Requires Cu(2+) as cofactor.

Functionally, lytic polysaccharide monooxygenase (LPMO) that depolymerizes chitin via the oxidation of scissile beta-(1-4)-glycosidic bonds, yielding C1 or C4 oxidation products. Catalysis by LPMOs requires the reduction of the active-site copper from Cu(II) to Cu(I) by a reducing agent and H(2)O(2) or O(2) as a cosubstrate. Has considerable affinity for alpha-chitin and, more so, beta-chitin. Active toward both alpha-chitin and beta-chitin allomorphs and enhances chitin degradation by an endoacting chitinase, in particular for alpha-chitin, and so plays a role in fungal chitin turnover. The catalytic activity increases when supplying reactions with hydrogen peroxide, confirming that it has peroxygenase activity. Does not show activity on phosphoric acid-swollen cellulose (PASC), Avicel, tamarind xyloglucan, birchwood xylan, beechwood xylan, acetyl glucuronoxylan from aspen, ivory nut mannan, acetylated konjac glucomannan, potato starch, heparin, hyaluronic acid, and chitosan. The sequence is that of AA11 family lytic polysaccharide monooxygenase A from Aspergillus fumigatus (strain CBS 144.89 / FGSC A1163 / CEA10) (Neosartorya fumigata).